We begin with the raw amino-acid sequence, 526 residues long: Glucose-6-phosphate isomerase (526 aa).

Catalysis depends on Glu-347, which acts as the Proton donor. Residues His-378 and Lys-493 contribute to the active site.

This sequence belongs to the GPI family.

It localises to the cytoplasm. It carries out the reaction alpha-D-glucose 6-phosphate = beta-D-fructose 6-phosphate. Its pathway is carbohydrate biosynthesis; gluconeogenesis. The protein operates within carbohydrate degradation; glycolysis; D-glyceraldehyde 3-phosphate and glycerone phosphate from D-glucose: step 2/4. Catalyzes the reversible isomerization of glucose-6-phosphate to fructose-6-phosphate. The chain is Glucose-6-phosphate isomerase from Chlamydia pneumoniae (Chlamydophila pneumoniae).